Consider the following 804-residue polypeptide: General transcription and DNA repair factor IIH helicase/translocase subunit XPB (804 aa).

Disordered regions lie at residues 1-61 (MSLK…NSNE) and 220-255 (QSSK…KSSS). The segment covering 14–36 (PDEDLEEYSDYSDVDNYGEEDDD) has biased composition (acidic residues). 2 stretches are compositionally biased toward low complexity: residues 47–60 (NNNK…TNSN) and 220–229 (QSSKQKSSKP). Residues 236-255 (EDKKDITNDSSKETAEKSSS) show a composition bias toward basic and acidic residues. The region spanning 335 to 497 (MFGNGRARSG…DLNFLIGPKM (163 aa)) is the Helicase ATP-binding domain. 348–355 (LPCGAGKT) is an ATP binding site. A DEVH box motif is present at residues 450-453 (DEVH). The Helicase C-terminal domain occupies 551–705 (QACQFLIDYH…KVITNLKGME (155 aa)). Disordered regions lie at residues 736-761 (DDGE…SSGS) and 782-804 (KQLK…TKRR). Over residues 784–793 (LKKDSKEHHA) the composition is skewed to basic and acidic residues. A compositionally biased stretch (basic residues) spans 794 to 804 (LFRKHLYTKRR).

Belongs to the helicase family. RAD25/XPB subfamily. Component of the 7-subunit TFIIH core complex composed of XPB/ptr8, XPD/rad15, ssl1, tfb1, tfb2, tfb4 and tfb5, which is active in NER. The core complex associates with the 3-subunit CTD-kinase module TFIIK composed of mcs2/cyclin H, mcs6/cdk7 and pmh1/tfb3 to form the 10-subunit holoenzyme (holo-TFIIH) active in transcription.

The protein localises to the nucleus. It catalyses the reaction Couples ATP hydrolysis with the unwinding of duplex DNA by translocating in the 3'-5' direction.. It carries out the reaction ATP + H2O = ADP + phosphate + H(+). Probable ATP-dependent 3'-5' DNA helicase/translocase. Binds dsDNA rather than ssDNA, unzipping it in a translocase rather than classical helicase activity. Component of the general transcription and DNA repair factor IIH (TFIIH) core complex. When complexed to CDK-activating kinase (CAK), involved in RNA transcription by RNA polymerase II. Also involved in transcription-coupled nucleotide excision repair (NER) of damaged DNA. In NER, TFIIH acts by opening DNA around the lesion to allow the excision of the damaged oligonucleotide and its replacement by a new DNA fragment. The ATPase activity of XPB/ptr8, but not its helicase activity, is required for DNA opening. In transcription, TFIIH has an essential role in transcription initiation. When the pre-initiation complex (PIC) has been established, TFIIH is required for promoter opening and promoter escape. The ATP-dependent helicase activity of XPB/ptr8 is required for promoter escape but not for promoter opening. Plays a role in mRNA export. This chain is General transcription and DNA repair factor IIH helicase/translocase subunit XPB, found in Schizosaccharomyces pombe (strain 972 / ATCC 24843) (Fission yeast).